Consider the following 224-residue polypeptide: NADH-quinone oxidoreductase subunit B (224 aa).

[4Fe-4S] cluster-binding residues include cysteine 67, cysteine 68, cysteine 133, and cysteine 162. The disordered stretch occupies residues 200–224 (DMPAEKDRKRGERIKVTNLRTPDEI). The segment covering 201–224 (MPAEKDRKRGERIKVTNLRTPDEI) has biased composition (basic and acidic residues).

The protein belongs to the complex I 20 kDa subunit family. NDH-1 is composed of 14 different subunits. Subunits NuoB, C, D, E, F, and G constitute the peripheral sector of the complex. [4Fe-4S] cluster is required as a cofactor.

It is found in the cell inner membrane. The enzyme catalyses a quinone + NADH + 5 H(+)(in) = a quinol + NAD(+) + 4 H(+)(out). NDH-1 shuttles electrons from NADH, via FMN and iron-sulfur (Fe-S) centers, to quinones in the respiratory chain. The immediate electron acceptor for the enzyme in this species is believed to be ubiquinone. Couples the redox reaction to proton translocation (for every two electrons transferred, four hydrogen ions are translocated across the cytoplasmic membrane), and thus conserves the redox energy in a proton gradient. The sequence is that of NADH-quinone oxidoreductase subunit B from Aeromonas salmonicida (strain A449).